The sequence spans 286 residues: 2,3,4,5-tetrahydropyridine-2,6-dicarboxylate N-succinyltransferase (286 aa).

It belongs to the transferase hexapeptide repeat family.

It localises to the cytoplasm. It catalyses the reaction (S)-2,3,4,5-tetrahydrodipicolinate + succinyl-CoA + H2O = (S)-2-succinylamino-6-oxoheptanedioate + CoA. It participates in amino-acid biosynthesis; L-lysine biosynthesis via DAP pathway; LL-2,6-diaminopimelate from (S)-tetrahydrodipicolinate (succinylase route): step 1/3. This chain is 2,3,4,5-tetrahydropyridine-2,6-dicarboxylate N-succinyltransferase, found in Rhizobium leguminosarum bv. trifolii (strain WSM2304).